Here is a 279-residue protein sequence, read N- to C-terminus: Movement protein (279 aa).

It belongs to the cucumovirus movement protein family.

It localises to the host cell junction. The protein resides in the host plasmodesma. Functionally, transports viral genome to neighboring plant cells directly through plasmosdesmata, without any budding. The movement protein allows efficient cell to cell propagation, by bypassing the host cell wall barrier. Acts by forming a tubular structure at the host plasmodesmata, enlarging it enough to allow free passage of virion capsids. The chain is Movement protein from Cucumis sativus (Cucumber).